We begin with the raw amino-acid sequence, 88 residues long: Phage-like element PBSX protein XkdR (88 aa).

The protein to B.subtilis YqbR.

This is Phage-like element PBSX protein XkdR (xkdR) from Bacillus subtilis (strain 168).